A 185-amino-acid polypeptide reads, in one-letter code: Large ribosomal subunit protein uL10 (185 aa).

A disordered region spans residues 165 to 185; the sequence is LRAKKEEQGGAGTPAPAEAAE.

It belongs to the universal ribosomal protein uL10 family. As to quaternary structure, part of the ribosomal stalk of the 50S ribosomal subunit. The N-terminus interacts with L11 and the large rRNA to form the base of the stalk. The C-terminus forms an elongated spine to which L12 dimers bind in a sequential fashion forming a multimeric L10(L12)X complex.

Its function is as follows. Forms part of the ribosomal stalk, playing a central role in the interaction of the ribosome with GTP-bound translation factors. The sequence is that of Large ribosomal subunit protein uL10 from Streptomyces griseus subsp. griseus (strain JCM 4626 / CBS 651.72 / NBRC 13350 / KCC S-0626 / ISP 5235).